The following is a 165-amino-acid chain: Large ribosomal subunit protein uL10 (165 aa).

This sequence belongs to the universal ribosomal protein uL10 family. In terms of assembly, part of the ribosomal stalk of the 50S ribosomal subunit. The N-terminus interacts with L11 and the large rRNA to form the base of the stalk. The C-terminus forms an elongated spine to which L12 dimers bind in a sequential fashion forming a multimeric L10(L12)X complex.

Its function is as follows. Forms part of the ribosomal stalk, playing a central role in the interaction of the ribosome with GTP-bound translation factors. This is Large ribosomal subunit protein uL10 from Burkholderia multivorans (strain ATCC 17616 / 249).